We begin with the raw amino-acid sequence, 324 residues long: Rho crystallin (324 aa).

An N-acetylthreonine modification is found at threonine 2. Position 218 to 281 (218 to 281) interacts with NADP(+); the sequence is SVLGSHRDRN…SFTPARIKQN (64 aa).

It belongs to the aldo/keto reductase family. As to quaternary structure, monomer.

This Rana temporaria (European common frog) protein is Rho crystallin.